We begin with the raw amino-acid sequence, 326 residues long: Phospho-N-acetylmuramoyl-pentapeptide-transferase (326 aa).

10 helical membrane-spanning segments follow: residues 3-23 (LPTKIFFTSFIFGFILSPYFI), 51-71 (TPTMGGVVILTSSLLPILFWV), 77-97 (ILLLVSITLSFALIGFIDDYL), 113-133 (ILIQFIVALVGMSVFKLYFTE), 143-163 (GIMIDFSYLYAPFAAFIVVGS), 175-195 (GLAATQIIASFVSLGLVAYMT), 199-219 (ISVILFCITFIGATLSFLWFN), 225-245 (IFMGDIGSLSIGAALGLTSVL), 250-270 (VLFAVIGVIFVIETLSVVIQV), and 306-326 (IVIKFLIITIVCSVFTVAFLL).

The protein belongs to the glycosyltransferase 4 family. MraY subfamily. Mg(2+) serves as cofactor.

It localises to the cell membrane. The enzyme catalyses UDP-N-acetyl-alpha-D-muramoyl-L-alanyl-gamma-D-glutamyl-meso-2,6-diaminopimeloyl-D-alanyl-D-alanine + di-trans,octa-cis-undecaprenyl phosphate = di-trans,octa-cis-undecaprenyl diphospho-N-acetyl-alpha-D-muramoyl-L-alanyl-D-glutamyl-meso-2,6-diaminopimeloyl-D-alanyl-D-alanine + UMP. The protein operates within cell wall biogenesis; peptidoglycan biosynthesis. Functionally, catalyzes the initial step of the lipid cycle reactions in the biosynthesis of the cell wall peptidoglycan: transfers peptidoglycan precursor phospho-MurNAc-pentapeptide from UDP-MurNAc-pentapeptide onto the lipid carrier undecaprenyl phosphate, yielding undecaprenyl-pyrophosphoryl-MurNAc-pentapeptide, known as lipid I. The polypeptide is Phospho-N-acetylmuramoyl-pentapeptide-transferase (Wolbachia sp. subsp. Brugia malayi (strain TRS)).